A 149-amino-acid polypeptide reads, in one-letter code: Prefoldin subunit alpha (149 aa).

It belongs to the prefoldin alpha subunit family. As to quaternary structure, heterohexamer of two alpha and four beta subunits.

The protein localises to the cytoplasm. Its function is as follows. Molecular chaperone capable of stabilizing a range of proteins. Seems to fulfill an ATP-independent, HSP70-like function in archaeal de novo protein folding. This is Prefoldin subunit alpha from Methanoculleus marisnigri (strain ATCC 35101 / DSM 1498 / JR1).